We begin with the raw amino-acid sequence, 236 residues long: 2-C-methyl-D-erythritol 4-phosphate cytidylyltransferase (236 aa).

It belongs to the IspD/TarI cytidylyltransferase family. IspD subfamily. In terms of assembly, homodimer.

It carries out the reaction 2-C-methyl-D-erythritol 4-phosphate + CTP + H(+) = 4-CDP-2-C-methyl-D-erythritol + diphosphate. It participates in isoprenoid biosynthesis; isopentenyl diphosphate biosynthesis via DXP pathway; isopentenyl diphosphate from 1-deoxy-D-xylulose 5-phosphate: step 2/6. In terms of biological role, catalyzes the formation of 4-diphosphocytidyl-2-C-methyl-D-erythritol from CTP and 2-C-methyl-D-erythritol 4-phosphate (MEP). This is 2-C-methyl-D-erythritol 4-phosphate cytidylyltransferase from Escherichia coli O17:K52:H18 (strain UMN026 / ExPEC).